The following is a 476-amino-acid chain: Protein transport protein Sec61 subunit alpha isoform 2 (476 aa).

Residues 1-32 lie on the Cytoplasmic side of the membrane; that stretch reads MGIKFLEVIKPFCAVLPEIQKPERKIQFREKV. The helical transmembrane segment at 33 to 53 threads the bilayer; it reads LWTAITLFIFLVCCQIPLFGI. The Lumenal portion of the chain corresponds to 54-75; the sequence is MSSDSADPFYWMRVILASNRGT. A helical transmembrane segment spans residues 76 to 96; sequence LMELGISPIVTSGLIMQLLAG. Residues 97–117 lie on the Cytoplasmic side of the membrane; that stretch reads AKIIEVGDTPKDRALFNGAQK. Residues 118-138 form a helical membrane-spanning segment; sequence LFGMIITIGQAIVYVMTGMYG. At 139 to 144 the chain is on the lumenal side; that stretch reads DPAEMG. A helical membrane pass occupies residues 145 to 165; it reads AGICLLIIIQLFVAGLIVLLL. Residues 166 to 172 lie on the Cytoplasmic side of the membrane; the sequence is DELLQKG. A helical transmembrane segment spans residues 173–193; the sequence is YGLGSGISLFIATNICETIVW. Residues 194–240 lie on the Lumenal side of the membrane; it reads KASSPTTINTGRGTEFEGAVIALFHLLATRTDKVRALREAFYRQNLP. A helical transmembrane segment spans residues 241-261; it reads NLMNLIATVFVFAVVIYFQGF. Over 262–288 the chain is Cytoplasmic; sequence RVDLPIKSARYRGQYSSYPIKLFYTSN. Residues 289 to 309 form a helical membrane-spanning segment; it reads IPIILQSALVSNLYVISQMLS. Topologically, residues 310–353 are lumenal; it reads VRFSGNFLVNLLGQWADVSGGGPARSYPVGGLCYYLSPPESMGA. A helical transmembrane segment spans residues 354 to 374; sequence ILEDPVHVVVYIIFMLGSCAF. Residues 375 to 420 lie on the Cytoplasmic side of the membrane; it reads FSKTWIEVSGSSAKDVAKQLKEQQMVMRGHRDTSMVHELNRYIPTA. The next 2 membrane-spanning stretches (helical) occupy residues 421–441 and 442–462; these read AAFG…LGAI and GSGT…EIFV. At 463–476 the chain is on the cytoplasmic side; sequence KEQAEVGGMGALFF.

It belongs to the SecY/SEC61-alpha family. The SEC61 channel-forming translocon complex consists of channel-forming core components SEC61A1, SEC61B and SEC61G and different auxiliary components such as SEC62 and SEC63.

The protein resides in the endoplasmic reticulum membrane. Component of SEC61 channel-forming translocon complex that mediates transport of signal peptide-containing precursor polypeptides across the endoplasmic reticulum (ER). Forms a ribosome receptor and a gated pore in the ER membrane, both functions required for cotranslational translocation of nascent polypeptides. The protein is Protein transport protein Sec61 subunit alpha isoform 2 (SEC61A2) of Pongo abelii (Sumatran orangutan).